A 564-amino-acid polypeptide reads, in one-letter code: Ribonuclease J (564 aa).

Residues histidine 85, histidine 87, aspartate 89, histidine 90, histidine 153, and aspartate 175 each coordinate Zn(2+). Histidine 375–histidine 379 contacts substrate. Position 401 (histidine 401) interacts with Zn(2+).

The protein belongs to the metallo-beta-lactamase superfamily. RNA-metabolizing metallo-beta-lactamase-like family. Bacterial RNase J subfamily. In terms of assembly, homodimer, may be a subunit of the RNA degradosome. The cofactor is Zn(2+).

The protein resides in the cytoplasm. Its function is as follows. An RNase that has 5'-3' exonuclease and possibly endonuclease activity. Plays a role in 16S and 23S rRNA processing. Might have a role in mRNA maturation and/or decay. The chain is Ribonuclease J from Sinorhizobium meliloti (strain Sm2011 / Rm2011 / 2011).